Consider the following 802-residue polypeptide: Phenylalanine--tRNA ligase beta subunit (802 aa).

Positions 40 to 155 (SASLKNVVVG…EHVETGVSAI (116 aa)) constitute a tRNA-binding domain. The region spanning 409 to 484 (KAVNKIETSL…RIYGYDEIPV (76 aa)) is the B5 domain. Residues Asp462, Asp468, Glu471, and Glu472 each coordinate Mg(2+). An FDX-ACB domain is found at 709–802 (PRYPEMTRDL…LQAKLHAIIR (94 aa)).

Belongs to the phenylalanyl-tRNA synthetase beta subunit family. Type 1 subfamily. As to quaternary structure, tetramer of two alpha and two beta subunits. It depends on Mg(2+) as a cofactor.

It is found in the cytoplasm. It catalyses the reaction tRNA(Phe) + L-phenylalanine + ATP = L-phenylalanyl-tRNA(Phe) + AMP + diphosphate + H(+). The chain is Phenylalanine--tRNA ligase beta subunit from Listeria innocua serovar 6a (strain ATCC BAA-680 / CLIP 11262).